A 419-amino-acid chain; its full sequence is Sulfate adenylyltransferase (419 aa).

The protein belongs to the sulfate adenylyltransferase family.

The catalysed reaction is sulfate + ATP + H(+) = adenosine 5'-phosphosulfate + diphosphate. The protein operates within sulfur metabolism; hydrogen sulfide biosynthesis; sulfite from sulfate: step 1/3. In Psychrobacter sp. (strain PRwf-1), this protein is Sulfate adenylyltransferase.